Reading from the N-terminus, the 102-residue chain is Large ribosomal subunit protein bL21 (102 aa).

It belongs to the bacterial ribosomal protein bL21 family. Part of the 50S ribosomal subunit. Contacts protein L20.

This protein binds to 23S rRNA in the presence of protein L20. The protein is Large ribosomal subunit protein bL21 of Oleidesulfovibrio alaskensis (strain ATCC BAA-1058 / DSM 17464 / G20) (Desulfovibrio alaskensis).